The chain runs to 245 residues: tRNA1(Val) (adenine(37)-N6)-methyltransferase (245 aa).

Belongs to the methyltransferase superfamily. tRNA (adenine-N(6)-)-methyltransferase family.

It is found in the cytoplasm. It catalyses the reaction adenosine(37) in tRNA1(Val) + S-adenosyl-L-methionine = N(6)-methyladenosine(37) in tRNA1(Val) + S-adenosyl-L-homocysteine + H(+). In terms of biological role, specifically methylates the adenine in position 37 of tRNA(1)(Val) (anticodon cmo5UAC). This is tRNA1(Val) (adenine(37)-N6)-methyltransferase from Escherichia coli O157:H7 (strain EC4115 / EHEC).